Here is a 401-residue protein sequence, read N- to C-terminus: MFDKQEFVSKLVTEEKAKIVLLVMDGLGDIPVNGKTPLQAANTPNLDSLAKESDLGQTIPVLPGITPGSGPGHLSLFGYDPIRYQIGRGILEALGIGVEVGEKDVVARANFATWDGKVVLDRRAGRPATEESAKVVQLLSEKIKKIEDVEITFYPGKEHRFVVKFTGEGLGDNVTDADPQKEGHPMVWAEGLDEPSKKTARITNELIKKIAEVLKDNPKINFALIRGFSKYPDLPKFPQVYKMKAGAIATYPMYRGLAKLVGMEIIETGQTVADEIKTLKERWNDYDFFYVHVKKTDSYGEDGKFEEKVKVIEEVDALIPEIVSLNPDVLVITGDHSTPVPLKAHSWHPVPLLIWSKYTRRGLSQAFNEFECARGTLGTIHASDVMTLALAYAGKLEKFGA.

It belongs to the BPG-independent phosphoglycerate mutase family. A-PGAM subfamily.

It carries out the reaction (2R)-2-phosphoglycerate = (2R)-3-phosphoglycerate. Its pathway is carbohydrate degradation; glycolysis; pyruvate from D-glyceraldehyde 3-phosphate: step 3/5. Catalyzes the interconversion of 2-phosphoglycerate and 3-phosphoglycerate. The polypeptide is Probable 2,3-bisphosphoglycerate-independent phosphoglycerate mutase (Thermotoga petrophila (strain ATCC BAA-488 / DSM 13995 / JCM 10881 / RKU-1)).